The primary structure comprises 46 residues: U1-plectoxin-Pt1f (46 aa).

5 cysteine pairs are disulfide-bonded: Cys4-Cys18, Cys11-Cys24, Cys17-Cys35, Cys21-Cys44, and Cys26-Cys33.

Belongs to the neurotoxin 02 (plectoxin) family. 02 (plectoxin) subfamily. In terms of tissue distribution, expressed by the venom gland.

The protein resides in the secreted. Its function is as follows. Potent toxin that may paralyze and/or kill insect pests such as H.virescens (lepidoptera), S.exigua (beet armyworm) and M.sexta (tobacco hornworm). This is U1-plectoxin-Pt1f from Plectreurys tristis (Spider).